A 121-amino-acid polypeptide reads, in one-letter code: Immunoglobulin kappa variable 4-1 (121 aa).

The signal sequence occupies residues 1-20 (MVLQTQVFISLLLWISGAYG). Positions 21–43 (DIVMTQSPDSLAVSLGERATINC) are framework-1. The Ig-like domain maps to 21–121 (DIVMTQSPDS…YYCQQYYSTP (101 aa)). C43 and C114 form a disulfide bridge. A complementarity-determining-1 region spans residues 44–60 (KSSQSVLYSSNNKNYLA). The interval 61–75 (WYQQKPGQPPKLLIY) is framework-2. Residues 76 to 82 (WASTRES) form a complementarity-determining-2 region. Residues 83-114 (GVPDRFSGSGSGTDFTLTISSLQAEDVAVYYC) are framework-3. Positions 115–121 (QQYYSTP) are complementarity-determining-3.

In terms of assembly, immunoglobulins are composed of two identical heavy chains and two identical light chains; disulfide-linked.

It is found in the secreted. The protein localises to the cell membrane. Its function is as follows. V segment of the variable domain of immunoglobulins light chain that participates in the antigen recognition. Immunoglobulins, also known as antibodies, are membrane-bound or secreted glycoproteins produced by B lymphocytes. In the recognition phase of humoral immunity, the membrane-bound immunoglobulins serve as receptors which, upon binding of a specific antigen, trigger the clonal expansion and differentiation of B lymphocytes into immunoglobulins-secreting plasma cells. Secreted immunoglobulins mediate the effector phase of humoral immunity, which results in the elimination of bound antigens. The antigen binding site is formed by the variable domain of one heavy chain, together with that of its associated light chain. Thus, each immunoglobulin has two antigen binding sites with remarkable affinity for a particular antigen. The variable domains are assembled by a process called V-(D)-J rearrangement and can then be subjected to somatic hypermutations which, after exposure to antigen and selection, allow affinity maturation for a particular antigen. This chain is Immunoglobulin kappa variable 4-1, found in Homo sapiens (Human).